The chain runs to 127 residues: Large-conductance mechanosensitive channel (127 aa).

Helical transmembrane passes span 9 to 29, 32 to 52, and 75 to 95; these read EFAMRGNVMDLAVAVVMGVAF, IVTALVDGIIMPCVGLLLGGV, and VIDFIIVAFAIFILIKLINLL.

This sequence belongs to the MscL family. As to quaternary structure, homopentamer.

The protein resides in the cell inner membrane. Functionally, channel that opens in response to stretch forces in the membrane lipid bilayer. May participate in the regulation of osmotic pressure changes within the cell. The protein is Large-conductance mechanosensitive channel of Legionella pneumophila (strain Lens).